Here is a 140-residue protein sequence, read N- to C-terminus: ATP synthase epsilon chain (140 aa).

The protein belongs to the ATPase epsilon chain family. In terms of assembly, F-type ATPases have 2 components, CF(1) - the catalytic core - and CF(0) - the membrane proton channel. CF(1) has five subunits: alpha(3), beta(3), gamma(1), delta(1), epsilon(1). CF(0) has three main subunits: a, b and c.

It localises to the cell inner membrane. Functionally, produces ATP from ADP in the presence of a proton gradient across the membrane. This Legionella pneumophila (strain Paris) protein is ATP synthase epsilon chain.